Here is a 254-residue protein sequence, read N- to C-terminus: L-erythrulose-1-phosphate isomerase (254 aa).

His97 functions as the Electrophile in the catalytic mechanism. Catalysis depends on Glu170, which acts as the Proton acceptor. 2 residues coordinate substrate: Gly176 and Ser213.

This sequence belongs to the triosephosphate isomerase family. Homodimer.

The protein resides in the cytoplasm. The enzyme catalyses L-erythrulose 1-phosphate = D-erythrulose 4-phosphate. It functions in the pathway carbohydrate metabolism; erythritol degradation. In terms of biological role, catalyzes the isomerization of D-erythrulose-4P to L-erythrulose-1P. The protein is L-erythrulose-1-phosphate isomerase of Mesorhizobium japonicum (strain LMG 29417 / CECT 9101 / MAFF 303099) (Mesorhizobium loti (strain MAFF 303099)).